The sequence spans 142 residues: Large ribosomal subunit protein uL11 (142 aa).

The protein belongs to the universal ribosomal protein uL11 family. Part of the ribosomal stalk of the 50S ribosomal subunit. Interacts with L10 and the large rRNA to form the base of the stalk. L10 forms an elongated spine to which L12 dimers bind in a sequential fashion forming a multimeric L10(L12)X complex. One or more lysine residues are methylated.

Its function is as follows. Forms part of the ribosomal stalk which helps the ribosome interact with GTP-bound translation factors. The protein is Large ribosomal subunit protein uL11 of Bartonella henselae (strain ATCC 49882 / DSM 28221 / CCUG 30454 / Houston 1) (Rochalimaea henselae).